The chain runs to 381 residues: Alcohol dehydrogenase class-3 (381 aa).

Position 49 (cysteine 49) interacts with Zn(2+). NAD(+) is bound at residue histidine 50. Residues threonine 51 and histidine 71 each coordinate an alcohol. Residues histidine 71, glutamate 72, cysteine 101, cysteine 104, cysteine 107, cysteine 115, and cysteine 179 each contribute to the Zn(2+) site. NAD(+) contacts are provided by residues 204-209, aspartate 228, lysine 233, isoleucine 274, 297-299, 322-324, and arginine 374; these read GLGTVG, VGV, and TAF.

It belongs to the zinc-containing alcohol dehydrogenase family. Class-III subfamily. Homodimer. It depends on Zn(2+) as a cofactor.

The protein resides in the cytoplasm. It catalyses the reaction a primary alcohol + NAD(+) = an aldehyde + NADH + H(+). The catalysed reaction is a secondary alcohol + NAD(+) = a ketone + NADH + H(+). It carries out the reaction S-(hydroxymethyl)glutathione + NADP(+) = S-formylglutathione + NADPH + H(+). The enzyme catalyses S-(hydroxymethyl)glutathione + NAD(+) = S-formylglutathione + NADH + H(+). The sequence is that of Alcohol dehydrogenase class-3 from Oryza sativa subsp. japonica (Rice).